The following is an 89-amino-acid chain: MAKKSKIAKERKRQQMVEKYAELRRELKAKGDYEAIRKLPRDSSPTRLTGRCEVTGRPRGYMRQFKMSRIAFREYAHKGQIPGVKKSSW.

Belongs to the universal ribosomal protein uS14 family. As to quaternary structure, part of the 30S ribosomal subunit. Contacts proteins S3 and S10.

Binds 16S rRNA, required for the assembly of 30S particles and may also be responsible for determining the conformation of the 16S rRNA at the A site. The chain is Small ribosomal subunit protein uS14A from Oceanobacillus iheyensis (strain DSM 14371 / CIP 107618 / JCM 11309 / KCTC 3954 / HTE831).